A 474-amino-acid polypeptide reads, in one-letter code: Glutamyl-tRNA(Gln) amidotransferase subunit A (474 aa).

Catalysis depends on charge relay system residues Lys-76 and Ser-151. Ser-175 functions as the Acyl-ester intermediate in the catalytic mechanism.

This sequence belongs to the amidase family. GatA subfamily. Heterotrimer of A, B and C subunits.

It catalyses the reaction L-glutamyl-tRNA(Gln) + L-glutamine + ATP + H2O = L-glutaminyl-tRNA(Gln) + L-glutamate + ADP + phosphate + H(+). Its function is as follows. Allows the formation of correctly charged Gln-tRNA(Gln) through the transamidation of misacylated Glu-tRNA(Gln) in organisms which lack glutaminyl-tRNA synthetase. The reaction takes place in the presence of glutamine and ATP through an activated gamma-phospho-Glu-tRNA(Gln). This is Glutamyl-tRNA(Gln) amidotransferase subunit A from Chlorobium limicola (strain DSM 245 / NBRC 103803 / 6330).